The chain runs to 123 residues: Small ribosomal subunit protein uS12 (123 aa).

The residue at position 89 (aspartate 89) is a 3-methylthioaspartic acid.

This sequence belongs to the universal ribosomal protein uS12 family. In terms of assembly, part of the 30S ribosomal subunit. Contacts proteins S8 and S17. May interact with IF1 in the 30S initiation complex.

In terms of biological role, with S4 and S5 plays an important role in translational accuracy. Its function is as follows. Interacts with and stabilizes bases of the 16S rRNA that are involved in tRNA selection in the A site and with the mRNA backbone. Located at the interface of the 30S and 50S subunits, it traverses the body of the 30S subunit contacting proteins on the other side and probably holding the rRNA structure together. The combined cluster of proteins S8, S12 and S17 appears to hold together the shoulder and platform of the 30S subunit. In Bartonella tribocorum (strain CIP 105476 / IBS 506), this protein is Small ribosomal subunit protein uS12.